A 554-amino-acid polypeptide reads, in one-letter code: Oxygen-dependent choline dehydrogenase (554 aa).

FAD is bound at residue 4-33 (DYIIIGAGSAGNVLATRLTEDPNTTVLLLE). Residue His473 is the Proton acceptor of the active site.

Belongs to the GMC oxidoreductase family. Requires FAD as cofactor.

The enzyme catalyses choline + A = betaine aldehyde + AH2. It carries out the reaction betaine aldehyde + NAD(+) + H2O = glycine betaine + NADH + 2 H(+). Its pathway is amine and polyamine biosynthesis; betaine biosynthesis via choline pathway; betaine aldehyde from choline (cytochrome c reductase route): step 1/1. Its function is as follows. Involved in the biosynthesis of the osmoprotectant glycine betaine. Catalyzes the oxidation of choline to betaine aldehyde and betaine aldehyde to glycine betaine at the same rate. The sequence is that of Oxygen-dependent choline dehydrogenase from Klebsiella pneumoniae (strain 342).